A 256-amino-acid polypeptide reads, in one-letter code: DNA repair protein RecO (256 aa).

Belongs to the RecO family.

Its function is as follows. Involved in DNA repair and RecF pathway recombination. The chain is DNA repair protein RecO from Shouchella clausii (strain KSM-K16) (Alkalihalobacillus clausii).